Here is a 315-residue protein sequence, read N- to C-terminus: tRNA-dihydrouridine(16) synthase (315 aa).

FMN contacts are provided by residues 7–9 (PME) and Q68. C98 functions as the Proton donor in the catalytic mechanism. Residues K139, 200-202 (NGE), and 224-225 (GR) each bind FMN.

This sequence belongs to the Dus family. DusC subfamily. It depends on FMN as a cofactor.

The enzyme catalyses 5,6-dihydrouridine(16) in tRNA + NADP(+) = uridine(16) in tRNA + NADPH + H(+). The catalysed reaction is 5,6-dihydrouridine(16) in tRNA + NAD(+) = uridine(16) in tRNA + NADH + H(+). Its function is as follows. Catalyzes the synthesis of 5,6-dihydrouridine (D), a modified base found in the D-loop of most tRNAs, via the reduction of the C5-C6 double bond in target uridines. Specifically modifies U16 in tRNAs. The polypeptide is tRNA-dihydrouridine(16) synthase (Shigella flexneri).